The chain runs to 691 residues: Elongation factor G (691 aa).

Residues 8–283 (EDYRNFGIMA…AVVDYLPSPV (276 aa)) enclose the tr-type G domain. GTP contacts are provided by residues 17-24 (AHIDAGKT), 81-85 (DTPGH), and 135-138 (NKMD).

Belongs to the TRAFAC class translation factor GTPase superfamily. Classic translation factor GTPase family. EF-G/EF-2 subfamily.

The protein localises to the cytoplasm. Catalyzes the GTP-dependent ribosomal translocation step during translation elongation. During this step, the ribosome changes from the pre-translocational (PRE) to the post-translocational (POST) state as the newly formed A-site-bound peptidyl-tRNA and P-site-bound deacylated tRNA move to the P and E sites, respectively. Catalyzes the coordinated movement of the two tRNA molecules, the mRNA and conformational changes in the ribosome. The protein is Elongation factor G of Methylorubrum populi (strain ATCC BAA-705 / NCIMB 13946 / BJ001) (Methylobacterium populi).